The sequence spans 134 residues: MARVTVEDCVDKVENRFELVLLAGHRARQISQGAQITIDRDNDKNPVVALREIADETLSPDDLKEDLIHSLQKHVEVDEPEAAAPAQIASSSEEVAEGIADAAEEDMVAFDRMSEEELLAGIEGLVAPEKNDDF.

It belongs to the RNA polymerase subunit omega family. In terms of assembly, the RNAP catalytic core consists of 2 alpha, 1 beta, 1 beta' and 1 omega subunit. When a sigma factor is associated with the core the holoenzyme is formed, which can initiate transcription.

It carries out the reaction RNA(n) + a ribonucleoside 5'-triphosphate = RNA(n+1) + diphosphate. In terms of biological role, promotes RNA polymerase assembly. Latches the N- and C-terminal regions of the beta' subunit thereby facilitating its interaction with the beta and alpha subunits. This chain is DNA-directed RNA polymerase subunit omega, found in Brucella anthropi (strain ATCC 49188 / DSM 6882 / CCUG 24695 / JCM 21032 / LMG 3331 / NBRC 15819 / NCTC 12168 / Alc 37) (Ochrobactrum anthropi).